An 864-amino-acid polypeptide reads, in one-letter code: Leucine--tRNA ligase (864 aa).

The 'HIGH' region signature appears at 42–52 (PYPSGKLHMGH). Positions 624–628 (KMSKS) match the 'KMSKS' region motif. Lysine 627 contributes to the ATP binding site.

Belongs to the class-I aminoacyl-tRNA synthetase family.

The protein localises to the cytoplasm. The enzyme catalyses tRNA(Leu) + L-leucine + ATP = L-leucyl-tRNA(Leu) + AMP + diphosphate. The protein is Leucine--tRNA ligase of Burkholderia ambifaria (strain ATCC BAA-244 / DSM 16087 / CCUG 44356 / LMG 19182 / AMMD) (Burkholderia cepacia (strain AMMD)).